The chain runs to 388 residues: Xylose isomerase (388 aa).

Active-site residues include H54 and D57. 7 residues coordinate Mg(2+): E181, E217, H220, D245, D255, D257, and D287.

This sequence belongs to the xylose isomerase family. As to quaternary structure, homotetramer. Requires Mg(2+) as cofactor.

Its subcellular location is the cytoplasm. It carries out the reaction alpha-D-xylose = alpha-D-xylulofuranose. In Streptomyces thermocyaneoviolaceus, this protein is Xylose isomerase.